The chain runs to 633 residues: DNA mismatch repair protein MutL (633 aa).

This sequence belongs to the DNA mismatch repair MutL/HexB family.

This protein is involved in the repair of mismatches in DNA. It is required for dam-dependent methyl-directed DNA mismatch repair. May act as a 'molecular matchmaker', a protein that promotes the formation of a stable complex between two or more DNA-binding proteins in an ATP-dependent manner without itself being part of a final effector complex. The polypeptide is DNA mismatch repair protein MutL (Pseudomonas putida (strain W619)).